Consider the following 146-residue polypeptide: Stress-responsive DNAJB4-interacting membrane protein 1 (146 aa).

The N-terminal stretch at 1-26 (MWPAPCSVGRLLIFFMCSSSGYVVQG) is a signal peptide. The Extracellular portion of the chain corresponds to 27 to 66 (CGPSPGARTTLGSPLSLWSIKTPSHIFCTRRAINLGFPSP). A helical transmembrane segment spans residues 67 to 87 (PLVQLIFWSLNAGLDLYLCLI). Residues 88–94 (SSCGFSQ) are Cytoplasmic-facing. The chain crosses the membrane as a helical span at residues 95 to 115 (VFWPVEAFCSFSLSFFALALS). Over 116-146 (HKFVICRLDQHIFSGFTKSLKNLPPCHRTDI) the chain is Extracellular.

As to quaternary structure, homodimer. Interacts with DNAJB4. In terms of tissue distribution, expressed in brain with higher detection in neurons than astrocytes. Decreased expression in Alzheimer brains. Detected at protein level in brain and cervix.

It localises to the membrane. In terms of biological role, promotes neuronal cells survival to stress conditions. The polypeptide is Stress-responsive DNAJB4-interacting membrane protein 1 (SDIM1) (Homo sapiens (Human)).